Consider the following 479-residue polypeptide: Gamma-aminobutyric acid receptor subunit rho-1 (479 aa).

The signal sequence occupies residues 1 to 21 (MLAVPNMRFGIFLLWWGWVLA). The Extracellular portion of the chain corresponds to 22–280 (TESRMHWPGR…LYINFTLRRH (259 aa)). The interval 32–55 (EVHEMSKKGRPQRQRREVHEDAHK) is disordered. Basic and acidic residues predominate over residues 45–55 (QRREVHEDAHK). Arg125 is a 4-aminobutanoate binding site. N-linked (GlcNAc...) asparagine glycosylation occurs at Asn140. Position 189 (Ser189) interacts with 4-aminobutanoate. Cys198 and Cys212 form a disulfide bridge. Residue Glu217 participates in 4-aminobutanoate binding. Residues Asn234 and Asn274 are each glycosylated (N-linked (GlcNAc...) asparagine). The helical transmembrane segment at 281 to 301 (IFFFLLQTYFPATLMVMLSWV) threads the bilayer. Residues 302–313 (SFWIDRRAVPAR) lie on the Cytoplasmic side of the membrane. Residues 314-334 (VPLGITTVLTMSTIITGVNAS) traverse the membrane as a helical segment. Residues 335–345 (MPRVSYIKAVD) lie on the Extracellular side of the membrane. The chain crosses the membrane as a helical span at residues 346–366 (IYLWVSFVFVFLSVLEYAAVN). The Cytoplasmic portion of the chain corresponds to 367–457 (YLTTVQERKE…MRIDTHAIDK (91 aa)). The helical transmembrane segment at 458 to 478 (YSRIIFPAAYILFNLIYWSIF) threads the bilayer. Ser479 is a topological domain (extracellular).

This sequence belongs to the ligand-gated ion channel (TC 1.A.9) family. Gamma-aminobutyric acid receptor (TC 1.A.9.5) subfamily. GABRR1 sub-subfamily. Three rho subunits (rho-1/GBRR1, rho-2/GBRR2 and rho-3/GBRR3) coassemble either to form functional homopentamers or heteropentamers. Rho-1/GBRR1 subunits can also associate with alpha-1/GBRA1 subunits to form a functional GABAAR. Interacts with SQSTM1. In terms of tissue distribution, highly expressed in the retina. Expressed in a lesser extent in brain, lung and thymus.

It is found in the postsynaptic cell membrane. The protein localises to the cell membrane. The catalysed reaction is chloride(in) = chloride(out). Inhibited by TPMPA, a rho-specific antagonist, when forming a homopentamer. In contrast with other GABAARs, rho-1 GABAAR is not inhibited by bicuculline, when forming a homopentamer. In terms of biological role, rho subunit of the pentameric ligand-gated chloride channels responsible for mediating the effects of gamma-aminobutyric acid (GABA), the major inhibitory neurotransmitter in the brain. Rho-containing GABA-gated chloride channels are a subclass of GABA(A) receptors (GABAARs) entirely composed of rho subunits, where GABA molecules bind at the rho intersubunit interfaces. When activated by GABA, rho-GABAARs selectively allow the flow of chloride anions across the cell membrane down their electrochemical gradient. Rho-1 subunits are primarily expressed in retina where rho-1-containing GABAARs may play a role in retinal neurotransmission. Rho-1 GABAARs are also involved in neuronal tonic (extrasynaptic) and phasic (synaptic) transmission in the Purkinje neurons of the cerebellum. Rho-1 GABAARs may also contribute to the regulation of glial development in the cerebellum by controlling extrasynaptic transmission. The sequence is that of Gamma-aminobutyric acid receptor subunit rho-1 from Homo sapiens (Human).